The following is a 130-amino-acid chain: Ribosome-binding factor A (130 aa).

Belongs to the RbfA family. As to quaternary structure, monomer. Binds 30S ribosomal subunits, but not 50S ribosomal subunits or 70S ribosomes.

The protein localises to the cytoplasm. Functionally, one of several proteins that assist in the late maturation steps of the functional core of the 30S ribosomal subunit. Associates with free 30S ribosomal subunits (but not with 30S subunits that are part of 70S ribosomes or polysomes). Required for efficient processing of 16S rRNA. May interact with the 5'-terminal helix region of 16S rRNA. The sequence is that of Ribosome-binding factor A from Prochlorococcus marinus (strain AS9601).